The chain runs to 251 residues: Probable phosphatase Sama_2233 (251 aa).

H8, H10, H16, H41, E74, H102, H132, D193, and H195 together coordinate Zn(2+).

It belongs to the PHP family. It depends on Zn(2+) as a cofactor.

The protein is Probable phosphatase Sama_2233 of Shewanella amazonensis (strain ATCC BAA-1098 / SB2B).